We begin with the raw amino-acid sequence, 348 residues long: MAPRKSASVSSRKTAAKPAKKDFAGGTIAEFSKEDDLKAYREMLLIRRFEEKAGQLYGMGFIGGFCHLYIGQEAVVVGMQLALKEGDQVITGYRDHGHMLACGMSARGVMAELTGRRGGLSKGKGGSMHMFSKEKHFYGGHGIVGAQVSLGTGLAFANRYRGNDNVSLAYFGDGAANQGQVYESFNMAALWKLPVIYIVENNRYAMGTSVSRASAQTDFSQRGASFGIPGYQVDGMDVRAVKAAADEAVEHCRSGKGPIILEMLTYRYRGHSMSDPAKYRSKDEVQKMRSEHDPIEQVKARLTDKGWATEDELKQIDKEVRDIVADSADFAQSDPEPDVSELYTDILL.

Positions 1-21 (MAPRKSASVSSRKTAAKPAKK) are disordered.

Heterodimer of an alpha and a beta chain. Thiamine diphosphate serves as cofactor.

The catalysed reaction is N(6)-[(R)-lipoyl]-L-lysyl-[protein] + pyruvate + H(+) = N(6)-[(R)-S(8)-acetyldihydrolipoyl]-L-lysyl-[protein] + CO2. In terms of biological role, the pyruvate dehydrogenase complex catalyzes the overall conversion of pyruvate to acetyl-CoA and CO(2). It contains multiple copies of three enzymatic components: pyruvate dehydrogenase (E1), dihydrolipoamide acetyltransferase (E2) and lipoamide dehydrogenase (E3). The polypeptide is Pyruvate dehydrogenase E1 component subunit alpha (pdhA) (Rhizobium meliloti (strain 1021) (Ensifer meliloti)).